A 152-amino-acid polypeptide reads, in one-letter code: Nucleoside diphosphate kinase B (152 aa).

Residues 1–66 (MANLERTFIA…DRPFFPGLVK (66 aa)) are interaction with AKAP13. Lys-12, Phe-60, Arg-88, Thr-94, Arg-105, and Asn-115 together coordinate ATP. Residue His-118 is the Pros-phosphohistidine intermediate of the active site.

It belongs to the NDK family. Hexamer of two different chains: An and B (A6, A5B, A4B2, A3B3, A2B4, AB5, B6). Interacts with CAPN8. Interacts with AKAP13. Interacts with ITGB1BP1 (via C-terminal domain region). Interacts with BCL2L10. Requires Mg(2+) as cofactor. In terms of tissue distribution, expressed in the base region of the oxyntic and pyloric mucosae.

The protein localises to the cytoplasm. Its subcellular location is the cell projection. The protein resides in the lamellipodium. It is found in the ruffle. It localises to the nucleus. It catalyses the reaction a 2'-deoxyribonucleoside 5'-diphosphate + ATP = a 2'-deoxyribonucleoside 5'-triphosphate + ADP. It carries out the reaction a ribonucleoside 5'-diphosphate + ATP = a ribonucleoside 5'-triphosphate + ADP. The enzyme catalyses ATP + protein L-histidine = ADP + protein N-phospho-L-histidine.. Major role in the synthesis of nucleoside triphosphates other than ATP. The ATP gamma phosphate is transferred to the NDP beta phosphate via a ping-pong mechanism, using a phosphorylated active-site intermediate. Negatively regulates Rho activity by interacting with AKAP13/LBC. Acts as a transcriptional activator of the MYC gene; binds DNA non-specifically. Binds to both single-stranded guanine- and cytosine-rich strands within the nuclease hypersensitive element (NHE) III(1) region of the MYC gene promoter. Does not bind to duplex NHE III(1). Has G-quadruplex (G4) DNA-binding activity, which is independent of its nucleotide-binding and kinase activity. Binds both folded and unfolded G4 with similar low nanomolar affinities. Stabilizes folded G4s regardless of whether they are prefolded or not. Exhibits histidine protein kinase activity. In Mus musculus (Mouse), this protein is Nucleoside diphosphate kinase B (Nme2).